The chain runs to 365 residues: Protein RecA (365 aa).

76–83 (GPESSGKT) is an ATP binding site. Residues 346-365 (DVPGSERDGDEDAGDMEASA) are disordered. Positions 353–365 (DGDEDAGDMEASA) are enriched in acidic residues.

This sequence belongs to the RecA family.

The protein localises to the cytoplasm. In terms of biological role, can catalyze the hydrolysis of ATP in the presence of single-stranded DNA, the ATP-dependent uptake of single-stranded DNA by duplex DNA, and the ATP-dependent hybridization of homologous single-stranded DNAs. It interacts with LexA causing its activation and leading to its autocatalytic cleavage. This Parvibaculum lavamentivorans (strain DS-1 / DSM 13023 / NCIMB 13966) protein is Protein RecA.